The chain runs to 258 residues: Hydroxyacylglutathione hydrolase (258 aa).

H55, H57, D59, H60, H115, D132, and H170 together coordinate Zn(2+).

It belongs to the metallo-beta-lactamase superfamily. Glyoxalase II family. As to quaternary structure, monomer. The cofactor is Zn(2+).

The catalysed reaction is an S-(2-hydroxyacyl)glutathione + H2O = a 2-hydroxy carboxylate + glutathione + H(+). The protein operates within secondary metabolite metabolism; methylglyoxal degradation; (R)-lactate from methylglyoxal: step 2/2. Thiolesterase that catalyzes the hydrolysis of S-D-lactoyl-glutathione to form glutathione and D-lactic acid. In Shewanella denitrificans (strain OS217 / ATCC BAA-1090 / DSM 15013), this protein is Hydroxyacylglutathione hydrolase.